The primary structure comprises 400 residues: MTTFSEKEKIQLLADIVELQTENNNEIDVCNYLKDLFDKYDIKSEILKVNEHRANIVAEIGNGSPILALSGHMDVVDAGNQDNWTYPPFQLTEKAGKLYGRGTTDMKGGLMALVITLIELKEQNQLPQGTIRLLATAGEEKEQEGAKLLADKGYLDDVDGLIIAEPTGSGIYYAHKGSMSCKVTATGKAVHSSVPFIGDNAIDTLLEFYNQFKEKYSELKKHDTKHELDVAPMFKSLIGKEISEEDANYASGLTAVCSIINGGKQFNSVPDEASLEFNVRPVPEYDNDFIESFFQNIINDVDSNKLSLDIPSNHRPVTSDKNSKLITTIKDVASSYVEQDEIFVSALVGATDASSFLGDNKDNVDLAIFGPGNPLMAHQIDEYCLTVNIQISTSTFSLIK.

Histidine 72 serves as a coordination point for Zn(2+). Residue aspartate 74 is part of the active site. Aspartate 105 is a Zn(2+) binding site. Glutamate 139 acts as the Proton acceptor in catalysis. Residues glutamate 140, glutamate 165, and histidine 378 each contribute to the Zn(2+) site.

Belongs to the peptidase M20A family. The cofactor is Zn(2+). Requires Co(2+) as cofactor.

It carries out the reaction N-succinyl-(2S,6S)-2,6-diaminopimelate + H2O = (2S,6S)-2,6-diaminopimelate + succinate. It participates in amino-acid biosynthesis; L-lysine biosynthesis via DAP pathway; LL-2,6-diaminopimelate from (S)-tetrahydrodipicolinate (succinylase route): step 3/3. The polypeptide is Probable succinyl-diaminopimelate desuccinylase (dapE) (Staphylococcus aureus (strain Mu50 / ATCC 700699)).